The following is a 387-amino-acid chain: O-methyltransferase lepI (387 aa).

135–148 (FENLWPVLMALPDF) serves as a coordination point for substrate. The substrate binding stretch occupies residues 175-195 (CFHWLATQPTRIANFKVLLTD). S-adenosyl-L-methionine contacts are provided by residues 227–228 (GG), Asp-252, 275–276 (NF), and Arg-291.

This sequence belongs to the class I-like SAM-binding methyltransferase superfamily. Cation-independent O-methyltransferase family.

Functionally, O-methyltransferase; part of the gene cluster 23 that mediates the biosynthesis of a family of 2-pyridones known as leporins. The hybrid PKS-NRPS synthetase lepA and the enoyl reductase lepG are responsible for fusion of phenylalanine with a hexaketide and subsequent release of the stable tetramic acid precursor, pre-leporin C. Because lepA lacks a designated enoylreductase (ER) domain, the required activity is provided the enoyl reductase lepG. It is possible that the dehydrogenase lepF also participates in production of pre-leporin C. Cytochrome P450 monooxygenase lepH is then required for the ring expansion step to yield leporin C. Leporin C is then presumably further oxidized by the N-hydroxylase lepD to form leporin B. LepI may possess a function in biosynthesis upstream of lepA. Leporin B is further oxidized in the presence of ferric ion to give the leporin B trimer-iron chelate, but whether or not this reaction is catalyzed by an enzyme in the pathway or by ferric ion is not determined yet. This chain is O-methyltransferase lepI, found in Aspergillus flavus (strain ATCC 200026 / FGSC A1120 / IAM 13836 / NRRL 3357 / JCM 12722 / SRRC 167).